The following is a 180-amino-acid chain: Insulin-like growth factor 2 (180 aa).

The first 24 residues, 1-24 (MGIPVGKSMLVLLISLAFALCCIA), serve as a signal peptide directing secretion. The segment at 25–52 (AYRPSETLCGGELVDTLQFVCSDRGFYF) is b. Disulfide bonds link C33-C71, C45-C84, and C70-C75. A c region spans residues 53–64 (SRPSSRANRRSR). The tract at residues 65-85 (GIVEECCFRSCDLALLETYCA) is a. The interval 86 to 91 (TPAKSE) is d. The propeptide at 92-180 (RDVSTSQAVL…ASSEMSSNHQ (89 aa)) is e peptide. A disordered region spans residues 160–180 (VLPPKDPAHGGASSEMSSNHQ).

Belongs to the insulin family. In terms of assembly, interacts with MYORG; this interaction is required for IGF2 secretion. Interacts with integrins ITGAV:ITGB3 and ITGA6:ITGB4; integrin-binding is required for IGF2 signaling. Interacts with IGFBP2. Post-translationally, proteolytically processed by PCSK4, proIGF2 is cleaved at Arg-128 and Arg-92 to generate big-IGF2 and mature IGF2.

The protein localises to the secreted. The insulin-like growth factors possess growth-promoting activity. Major fetal growth hormone in mammals. Plays a key role in regulating fetoplacental development. IGF2 is influenced by placental lactogen. Also involved in tissue differentiation. In adults, involved in glucose metabolism in adipose tissue, skeletal muscle and liver. Acts as a ligand for integrin which is required for IGF2 signaling. Positively regulates myogenic transcription factor MYOD1 function by facilitating the recruitment of transcriptional coactivators, thereby controlling muscle terminal differentiation. Inhibits myoblast differentiation and modulates metabolism via increasing the mitochondrial respiration rate. Its function is as follows. Preptin undergoes glucose-mediated co-secretion with insulin, and acts as a physiological amplifier of glucose-mediated insulin secretion. Exhibits osteogenic properties by increasing osteoblast mitogenic activity through phosphoactivation of MAPK1 and MAPK3. The sequence is that of Insulin-like growth factor 2 from Rattus norvegicus (Rat).